A 203-amino-acid polypeptide reads, in one-letter code: Imidazoleglycerol-phosphate dehydratase (203 aa).

The interval 184–203 (DPRRSSQIPSSKGVLEQAGQ) is disordered.

The protein belongs to the imidazoleglycerol-phosphate dehydratase family.

It localises to the cytoplasm. It catalyses the reaction D-erythro-1-(imidazol-4-yl)glycerol 3-phosphate = 3-(imidazol-4-yl)-2-oxopropyl phosphate + H2O. The protein operates within amino-acid biosynthesis; L-histidine biosynthesis; L-histidine from 5-phospho-alpha-D-ribose 1-diphosphate: step 6/9. This is Imidazoleglycerol-phosphate dehydratase from Prochlorococcus marinus (strain NATL1A).